Reading from the N-terminus, the 444-residue chain is Xylose isomerase (444 aa).

Residues His-101 and Asp-104 contribute to the active site. Residues Glu-232, Glu-268, His-271, Asp-296, Asp-307, Asp-309, and Asp-339 each contribute to the Mg(2+) site.

It belongs to the xylose isomerase family. Homotetramer. The cofactor is Mg(2+).

It localises to the cytoplasm. It catalyses the reaction alpha-D-xylose = alpha-D-xylulofuranose. The chain is Xylose isomerase from Thermotoga petrophila (strain ATCC BAA-488 / DSM 13995 / JCM 10881 / RKU-1).